Consider the following 201-residue polypeptide: 3-isopropylmalate dehydratase small subunit (201 aa).

It belongs to the LeuD family. LeuD type 1 subfamily. As to quaternary structure, heterodimer of LeuC and LeuD.

It catalyses the reaction (2R,3S)-3-isopropylmalate = (2S)-2-isopropylmalate. The protein operates within amino-acid biosynthesis; L-leucine biosynthesis; L-leucine from 3-methyl-2-oxobutanoate: step 2/4. In terms of biological role, catalyzes the isomerization between 2-isopropylmalate and 3-isopropylmalate, via the formation of 2-isopropylmaleate. The sequence is that of 3-isopropylmalate dehydratase small subunit from Enterobacter sp. (strain 638).